The sequence spans 347 residues: Glycerol-1-phosphate dehydrogenase [NAD(P)+] (347 aa).

NAD(+)-binding positions include 94 to 98 (GKVID) and 116 to 119 (TAAS). Asp121 is a binding site for substrate. Ser125 is an NAD(+) binding site. Asp168 serves as a coordination point for substrate. Residues Asp168 and His248 each coordinate Zn(2+). His252 is a binding site for substrate. His264 lines the Zn(2+) pocket.

It belongs to the glycerol-1-phosphate dehydrogenase family. In terms of assembly, homooctamer. Zn(2+) serves as cofactor.

The protein resides in the cytoplasm. It catalyses the reaction sn-glycerol 1-phosphate + NAD(+) = dihydroxyacetone phosphate + NADH + H(+). It carries out the reaction sn-glycerol 1-phosphate + NADP(+) = dihydroxyacetone phosphate + NADPH + H(+). It functions in the pathway membrane lipid metabolism; glycerophospholipid metabolism. With respect to regulation, partially inhibited by divalent metal cations such as Co(2+), Cu(2+) and Ni(2+). Functionally, catalyzes the NAD(P)H-dependent reduction of dihydroxyacetonephosphate (DHAP or glycerone phosphate) to glycerol 1-phosphate (G1P). The G1P thus generated is used as the glycerophosphate backbone of phospholipids in the cellular membranes of Archaea. Is also able to catalyze the reverse reaction, i.e. the NAD(P)(+)-dependent oxidation of G1P but not of G3P. Is not active toward glycerol, dihydroxyacetone, glyceraldehyde-3-phosphate, glyceraldehyde and glycerol-2-phosphate. This is Glycerol-1-phosphate dehydrogenase [NAD(P)+] (egsA) from Methanothermobacter thermautotrophicus (strain ATCC 29096 / DSM 1053 / JCM 10044 / NBRC 100330 / Delta H) (Methanobacterium thermoautotrophicum).